A 336-amino-acid polypeptide reads, in one-letter code: tRNA N6-adenosine threonylcarbamoyltransferase (336 aa).

Fe cation contacts are provided by His-108 and His-112. Substrate-binding positions include 129 to 133 (LISGG), Asp-161, Glu-178, and Ser-258. Residue Asp-286 coordinates Fe cation.

It belongs to the KAE1 / TsaD family. Requires Fe(2+) as cofactor.

Its subcellular location is the cytoplasm. It catalyses the reaction L-threonylcarbamoyladenylate + adenosine(37) in tRNA = N(6)-L-threonylcarbamoyladenosine(37) in tRNA + AMP + H(+). Required for the formation of a threonylcarbamoyl group on adenosine at position 37 (t(6)A37) in tRNAs that read codons beginning with adenine. Is probably involved in the transfer of the threonylcarbamoyl moiety of threonylcarbamoyl-AMP (TC-AMP) to the N6 group of A37. The protein is tRNA N6-adenosine threonylcarbamoyltransferase of Pyrobaculum neutrophilum (strain DSM 2338 / JCM 9278 / NBRC 100436 / V24Sta) (Thermoproteus neutrophilus).